The following is a 301-amino-acid chain: Ribosomal RNA small subunit methyltransferase H (301 aa).

S-adenosyl-L-methionine is bound by residues G33–H35, D52, F79, D100, and Q107.

Belongs to the methyltransferase superfamily. RsmH family.

It localises to the cytoplasm. It catalyses the reaction cytidine(1402) in 16S rRNA + S-adenosyl-L-methionine = N(4)-methylcytidine(1402) in 16S rRNA + S-adenosyl-L-homocysteine + H(+). Specifically methylates the N4 position of cytidine in position 1402 (C1402) of 16S rRNA. The protein is Ribosomal RNA small subunit methyltransferase H of Mycoplasmopsis synoviae (strain 53) (Mycoplasma synoviae).